The primary structure comprises 249 residues: RNA-free ribonuclease P (249 aa).

Positions asparagine 226 to isoleucine 249 are disordered. The span at tyrosine 232–serine 242 shows a compositional bias: basic and acidic residues.

The protein belongs to the HARP family.

The enzyme catalyses Endonucleolytic cleavage of RNA, removing 5'-extranucleotides from tRNA precursor.. Its function is as follows. RNA-free RNase P that catalyzes the removal of the 5'-leader sequence from pre-tRNA to produce the mature 5'-terminus. The polypeptide is RNA-free ribonuclease P (Methanosarcina barkeri (strain Fusaro / DSM 804)).